Here is a 447-residue protein sequence, read N- to C-terminus: MANVIVIGAQWGDEGKGKITDLLSRSADVVVRYQGGVNAGHTIVVKGQTFKLHLIPSGILYPNTDCIIGCGTVIDPQILIAEIDQLKELNISTDHLLISETAHVTMPYHRLIDQASEERRGSYKIGTTGRGIGPTYADKSERTGIRVLDLMDPDGLREQLEWTINYKNVILEKLYNLPPLDPQEVIEQYLGYAERLRPHVVDTSLKISDAIQRRRNILFEGAQGTLLDLDHGTYPYVTSSNPVAGGACVGTGVGPTMIDRVIGVSKAYTTRVGEGPFPTELDGELGELLCDRGAEFGTTTGRKRRCGWFDAVIGRYAVRINGMDCMALTKLDVLDELEEIQVCVAYDIDGQRSEHFPTSSRQFARCRPIYKTLPGWKVSTTECRTLEDLPQQALDYLKFLAELMEVPIAIVSLGASRDQTIIVEDPIHGPKRALLHPDGTPATLLSA.

GTP-binding positions include 12-18 (GDEGKGK) and 40-42 (GHT). Asp13 (proton acceptor) is an active-site residue. Residues Asp13 and Gly40 each coordinate Mg(2+). IMP-binding positions include 13–16 (DEGK), 38–41 (NAGH), Thr128, Arg142, Gln223, Thr238, and Arg302. The active-site Proton donor is the His41. 298 to 304 (TTTGRKR) contacts substrate. GTP is bound by residues Arg304, 330–332 (KLD), and 412–414 (SLG).

Belongs to the adenylosuccinate synthetase family. In terms of assembly, homodimer. Mg(2+) serves as cofactor.

It localises to the cytoplasm. It catalyses the reaction IMP + L-aspartate + GTP = N(6)-(1,2-dicarboxyethyl)-AMP + GDP + phosphate + 2 H(+). It functions in the pathway purine metabolism; AMP biosynthesis via de novo pathway; AMP from IMP: step 1/2. Plays an important role in the de novo pathway of purine nucleotide biosynthesis. Catalyzes the first committed step in the biosynthesis of AMP from IMP. This is Adenylosuccinate synthetase from Nostoc punctiforme (strain ATCC 29133 / PCC 73102).